A 617-amino-acid chain; its full sequence is BTB/POZ domain-containing protein At3g08570 (617 aa).

A BTB domain is found at 36–106 (GDITIVVDGE…CYGINFEITI (71 aa)). The 281-residue stretch at 210–490 (EWWIEDLSAL…VRVLYSEQLR (281 aa)) folds into the NPH3 domain. Tyrosine 431 carries the post-translational modification Phosphotyrosine. Disordered stretches follow at residues 505-525 (LSSQ…RDTY) and 585-617 (GGGP…ESMF). Positions 602–617 (SRLERKTVRSRPESMF) are enriched in basic and acidic residues.

This sequence belongs to the NPH3 family.

Its pathway is protein modification; protein ubiquitination. Its function is as follows. May act as a substrate-specific adapter of an E3 ubiquitin-protein ligase complex (CUL3-RBX1-BTB) which mediates the ubiquitination and subsequent proteasomal degradation of target proteins. The protein is BTB/POZ domain-containing protein At3g08570 of Arabidopsis thaliana (Mouse-ear cress).